Consider the following 254-residue polypeptide: Precorrin-3B C(17)-methyltransferase (254 aa).

The protein belongs to the precorrin methyltransferase family.

The enzyme catalyses precorrin-3B + S-adenosyl-L-methionine = precorrin-4 + S-adenosyl-L-homocysteine + 3 H(+). It participates in cofactor biosynthesis; adenosylcobalamin biosynthesis; cob(II)yrinate a,c-diamide from precorrin-2 (aerobic route): step 3/10. Functionally, methyltransferase that catalyzes the methylation of C-17 in precorrin-3B to form precorrin-4. In Sinorhizobium sp, this protein is Precorrin-3B C(17)-methyltransferase (cobJ).